A 499-amino-acid polypeptide reads, in one-letter code: Lysine--tRNA ligase (499 aa).

Positions 403 and 410 each coordinate Mg(2+).

It belongs to the class-II aminoacyl-tRNA synthetase family. In terms of assembly, homodimer. Mg(2+) is required as a cofactor.

It localises to the cytoplasm. The catalysed reaction is tRNA(Lys) + L-lysine + ATP = L-lysyl-tRNA(Lys) + AMP + diphosphate. This chain is Lysine--tRNA ligase, found in Campylobacter hominis (strain ATCC BAA-381 / DSM 21671 / CCUG 45161 / LMG 19568 / NCTC 13146 / CH001A).